Reading from the N-terminus, the 609-residue chain is Threonine--tRNA ligase (609 aa).

Positions 1-145 (MRLLLIHSDY…TIVPGAGAAV (145 aa)) are editing domain. Residues 194–485 (IHVDLMRSKE…TANQSVPQLP (292 aa)) form a catalytic region. Zn(2+)-binding residues include C286, H338, and H458.

This sequence belongs to the class-II aminoacyl-tRNA synthetase family. Homodimer. Zn(2+) is required as a cofactor.

The protein localises to the cytoplasm. It catalyses the reaction tRNA(Thr) + L-threonine + ATP = L-threonyl-tRNA(Thr) + AMP + diphosphate + H(+). Its function is as follows. Catalyzes the attachment of threonine to tRNA(Thr) in a two-step reaction: L-threonine is first activated by ATP to form Thr-AMP and then transferred to the acceptor end of tRNA(Thr). Also edits incorrectly charged L-seryl-tRNA(Thr). The sequence is that of Threonine--tRNA ligase from Methanosphaerula palustris (strain ATCC BAA-1556 / DSM 19958 / E1-9c).